Reading from the N-terminus, the 267-residue chain is Expansin-B1 (267 aa).

A signal peptide spans 1 to 22 (MASSSLLLACVVVAAMVSAVSC). N32 carries an N-linked (GlcNAc...) asparagine glycan. The Expansin-like EG45 domain maps to 61–167 (GGACGYKDVD…RRVKCKYPAD (107 aa)). 3 cysteine pairs are disulfide-bonded: C64/C92, C95/C162, and C100/C106. Residues 181–262 (NYLALLVKYV…GWKADSVYKS (82 aa)) form the Expansin-like CBD domain.

The protein belongs to the expansin family. Expansin B subfamily. In terms of tissue distribution, expressed in mature anthers but not in vegetative or other floral tissues.

The protein localises to the secreted. The protein resides in the cell wall. Its subcellular location is the membrane. Its function is as follows. May cause loosening and extension of plant cell walls by disrupting non-covalent bonding between cellulose microfibrils and matrix glucans. No enzymatic activity has been found. May be required for rapid internodal elongation in deepwater rice during submergence. This is Expansin-B1 (EXPB1a) from Oryza sativa subsp. japonica (Rice).